Consider the following 383-residue polypeptide: Ribosomal RNA large subunit methyltransferase G (383 aa).

This sequence belongs to the methyltransferase superfamily. RlmG family.

Its subcellular location is the cytoplasm. The enzyme catalyses guanosine(1835) in 23S rRNA + S-adenosyl-L-methionine = N(2)-methylguanosine(1835) in 23S rRNA + S-adenosyl-L-homocysteine + H(+). In terms of biological role, specifically methylates the guanine in position 1835 (m2G1835) of 23S rRNA. The chain is Ribosomal RNA large subunit methyltransferase G from Shewanella amazonensis (strain ATCC BAA-1098 / SB2B).